A 77-amino-acid polypeptide reads, in one-letter code: U8-lycotoxin-Ls1m (77 aa).

Residues 1–20 form the signal peptide; the sequence is MKLIIFTGLVLFSIVSLIEA. Residues 21–26 constitute a propeptide that is removed on maturation; that stretch reads QAENEK.

It belongs to the neurotoxin 19 (CSTX) family. 08 (U8-Lctx) subfamily. Post-translationally, contains 4 disulfide bonds. In terms of tissue distribution, expressed by the venom gland.

The protein resides in the secreted. The protein is U8-lycotoxin-Ls1m of Lycosa singoriensis (Wolf spider).